Here is an 80-residue protein sequence, read N- to C-terminus: DNA-binding protein HU-like (80 aa).

Belongs to the bacterial histone-like protein family.

In terms of biological role, histone-like DNA-binding protein which is capable of wrapping DNA to stabilize it, and thus to prevent its denaturation under extreme environmental conditions. The chain is DNA-binding protein HU-like from Rickettsia prowazekii (strain Madrid E).